The sequence spans 435 residues: Homoserine dehydrogenase (435 aa).

NADPH contacts are provided by T13, V14, and K104. V14 serves as a coordination point for NAD(+). Residues V14 and K104 each coordinate NADP(+). 4 residues coordinate Na(+): E128, V131, G133, and I135. Residues G186 and E189 each coordinate NADP(+). Positions 189 and 200 each coordinate L-homoserine. K204 serves as the catalytic Proton donor. G301 provides a ligand contact to NADPH. Residue G301 coordinates NAD(+). Residue G301 coordinates NADP(+). The region spanning 354–429 (YLRVQAKDEP…CVEKPITMIR (76 aa)) is the ACT domain.

The protein belongs to the homoserine dehydrogenase family. In terms of assembly, homotetramer. A metal cation serves as cofactor.

The catalysed reaction is L-homoserine + NAD(+) = L-aspartate 4-semialdehyde + NADH + H(+). Its pathway is amino-acid biosynthesis; L-methionine biosynthesis via de novo pathway; L-homoserine from L-aspartate: step 3/3. It participates in amino-acid biosynthesis; L-threonine biosynthesis; L-threonine from L-aspartate: step 3/5. Neither NaCl nor KCl increase the activity. L-threonine and L-serine do not markedly inhibit the oxidation activity. In terms of biological role, catalyzes the conversion of L-aspartate-beta-semialdehyde (L-Asa) to L-homoserine (L-Hse), the third step in the biosynthesis of threonine and methionine from aspartate. Is highly specific for NAD(+), and displays an approximate 479-fold (kcat/Km) preference for NAD(+) over NADP(+). This Neisseria gonorrhoeae (strain ATCC 700825 / FA 1090) protein is Homoserine dehydrogenase.